A 674-amino-acid polypeptide reads, in one-letter code: DNA ligase (674 aa).

NAD(+)-binding positions include 35-39 (DAEYD), 84-85 (SL), and Glu116. The active-site N6-AMP-lysine intermediate is Lys118. NAD(+)-binding residues include Arg139, Glu176, Lys293, and Lys317. Residues Cys411, Cys414, Cys429, and Cys435 each coordinate Zn(2+). One can recognise a BRCT domain in the interval 593-674 (DGVKPLEGTT…LLALLEEHGV (82 aa)).

The protein belongs to the NAD-dependent DNA ligase family. LigA subfamily. It depends on Mg(2+) as a cofactor. Mn(2+) is required as a cofactor.

The enzyme catalyses NAD(+) + (deoxyribonucleotide)n-3'-hydroxyl + 5'-phospho-(deoxyribonucleotide)m = (deoxyribonucleotide)n+m + AMP + beta-nicotinamide D-nucleotide.. In terms of biological role, DNA ligase that catalyzes the formation of phosphodiester linkages between 5'-phosphoryl and 3'-hydroxyl groups in double-stranded DNA using NAD as a coenzyme and as the energy source for the reaction. It is essential for DNA replication and repair of damaged DNA. The polypeptide is DNA ligase (Saccharophagus degradans (strain 2-40 / ATCC 43961 / DSM 17024)).